The primary structure comprises 211 residues: Redox-sensing transcriptional repressor Rex (211 aa).

The segment at residues 16 to 55 (LYYRYLLILNEEGKDKVSSTELSEAVQVDSASIRRDFSYF) is a DNA-binding region (H-T-H motif). Position 90–95 (90–95 (GVGNLG)) interacts with NAD(+).

Belongs to the transcriptional regulatory Rex family. As to quaternary structure, homodimer.

It is found in the cytoplasm. Functionally, modulates transcription in response to changes in cellular NADH/NAD(+) redox state. The polypeptide is Redox-sensing transcriptional repressor Rex (Lactobacillus acidophilus (strain ATCC 700396 / NCK56 / N2 / NCFM)).